The sequence spans 342 residues: Pre-mRNA-splicing factor 18 (342 aa).

Methionine 1 is subject to N-acetylmethionine.

The protein belongs to the PRP18 family. Heterodimer with PPIH. Interacts with PRPF4 and with the spliceosome. Part of a complex containing U4/U6 snRNPs. Also detected in the cytoplasm. Detected in brain, heart, liver and skeletal muscle.

The protein localises to the nucleus speckle. Functionally, participates in the second step of pre-mRNA splicing. Down-regulates the expression of potassium channel subunits. The chain is Pre-mRNA-splicing factor 18 (Prpf18) from Rattus norvegicus (Rat).